The primary structure comprises 572 residues: Arginine--tRNA ligase (572 aa).

The short motif at 122-132 (PNLAKEMHVGH) is the 'HIGH' region element.

This sequence belongs to the class-I aminoacyl-tRNA synthetase family. Monomer.

Its subcellular location is the cytoplasm. The enzyme catalyses tRNA(Arg) + L-arginine + ATP = L-arginyl-tRNA(Arg) + AMP + diphosphate. This chain is Arginine--tRNA ligase, found in Neisseria meningitidis serogroup A / serotype 4A (strain DSM 15465 / Z2491).